The sequence spans 104 residues: Large ribosomal subunit protein uL24 (104 aa).

Belongs to the universal ribosomal protein uL24 family. As to quaternary structure, part of the 50S ribosomal subunit.

Functionally, one of two assembly initiator proteins, it binds directly to the 5'-end of the 23S rRNA, where it nucleates assembly of the 50S subunit. In terms of biological role, one of the proteins that surrounds the polypeptide exit tunnel on the outside of the subunit. In Klebsiella pneumoniae (strain 342), this protein is Large ribosomal subunit protein uL24.